A 1430-amino-acid polypeptide reads, in one-letter code: Nephrocystin-4 (1430 aa).

Positions 824–1430 are sufficient for basal bodies localization; the sequence is MRMGNVGRPP…ETFCVKVRYE (607 aa). The tract at residues 828-857 is disordered; that stretch reads NVGRPPEKKLKRRETLPPSNSRIITMHDGR.

This sequence belongs to the NPHP4 family.

It localises to the cytoplasm. Its subcellular location is the cytoskeleton. The protein localises to the cilium basal body. Its function is as follows. Involved in the organization of apical junctions. Required for building functional cilia. Involved in the organization of the subapical actin network in multiciliated epithelial cells. Seems to recruit int to basal bodies of motile cilia which subsequently interacts with actin-modifying proteins such as daam1. May down-regulate the canonical Wnt pathway and promote the Wnt-PCP pathway. Acts as a negative regulator of the hippo pathway. The protein is Nephrocystin-4 (nphp4) of Xenopus laevis (African clawed frog).